The chain runs to 339 residues: NADH-quinone oxidoreductase subunit H (339 aa).

The next 8 helical transmembrane spans lie at Leu-19–Ala-39, Phe-87–Phe-107, Leu-120–Ala-140, Ser-153–Met-173, Phe-191–Val-211, Ile-253–Phe-273, Pro-275–Phe-295, and Leu-310–Met-330.

It belongs to the complex I subunit 1 family. In terms of assembly, NDH-1 is composed of 14 different subunits. Subunits NuoA, H, J, K, L, M, N constitute the membrane sector of the complex.

The protein resides in the cell inner membrane. It carries out the reaction a quinone + NADH + 5 H(+)(in) = a quinol + NAD(+) + 4 H(+)(out). Its function is as follows. NDH-1 shuttles electrons from NADH, via FMN and iron-sulfur (Fe-S) centers, to quinones in the respiratory chain. The immediate electron acceptor for the enzyme in this species is believed to be ubiquinone. Couples the redox reaction to proton translocation (for every two electrons transferred, four hydrogen ions are translocated across the cytoplasmic membrane), and thus conserves the redox energy in a proton gradient. This subunit may bind ubiquinone. This Methylobacillus flagellatus (strain ATCC 51484 / DSM 6875 / VKM B-1610 / KT) protein is NADH-quinone oxidoreductase subunit H.